The sequence spans 276 residues: Ribosomal RNA small subunit methyltransferase A (276 aa).

Residues N27, L29, G54, E75, D101, and N122 each contribute to the S-adenosyl-L-methionine site.

Belongs to the class I-like SAM-binding methyltransferase superfamily. rRNA adenine N(6)-methyltransferase family. RsmA subfamily.

Its subcellular location is the cytoplasm. It catalyses the reaction adenosine(1518)/adenosine(1519) in 16S rRNA + 4 S-adenosyl-L-methionine = N(6)-dimethyladenosine(1518)/N(6)-dimethyladenosine(1519) in 16S rRNA + 4 S-adenosyl-L-homocysteine + 4 H(+). In terms of biological role, specifically dimethylates two adjacent adenosines (A1518 and A1519) in the loop of a conserved hairpin near the 3'-end of 16S rRNA in the 30S particle. May play a critical role in biogenesis of 30S subunits. The sequence is that of Ribosomal RNA small subunit methyltransferase A from Brucella melitensis biotype 1 (strain ATCC 23456 / CCUG 17765 / NCTC 10094 / 16M).